The sequence spans 229 residues: Large ribosomal subunit protein uL1 (229 aa).

The protein belongs to the universal ribosomal protein uL1 family. Part of the 50S ribosomal subunit.

Its function is as follows. Binds directly to 23S rRNA. The L1 stalk is quite mobile in the ribosome, and is involved in E site tRNA release. In terms of biological role, protein L1 is also a translational repressor protein, it controls the translation of the L11 operon by binding to its mRNA. The protein is Large ribosomal subunit protein uL1 of Streptococcus suis (strain 98HAH33).